The following is a 340-amino-acid chain: Putative RRN3-like protein RRN3P2 (340 aa).

This sequence belongs to the RRN3 family.

This is Putative RRN3-like protein RRN3P2 (RRN3P2) from Homo sapiens (Human).